We begin with the raw amino-acid sequence, 375 residues long: Homeobox protein Meis3 (375 aa).

Residues 25–51 (PETVPAVPGPYGPHRPPQPLPPGLDSD) form a disordered region. Pro residues predominate over residues 31–46 (VPGPYGPHRPPQPLPP). One can recognise an MEIS N-terminal domain in the interval 96–179 (GGDVCSSDSF…PIDLVIEDRD (84 aa)). 2 disordered regions span residues 197-268 (PDQN…KRGI) and 329-348 (NRTG…GGYT). Positions 227-241 (SQSGDNSSDQGDGLD) are enriched in low complexity. The segment at residues 262–324 (RNKKRGIFPK…NARRRIVQPM (63 aa)) is a DNA-binding region (homeobox; TALE-type).

It belongs to the TALE/MEIS homeobox family.

The protein resides in the nucleus. Its function is as follows. Transcriptional regulator which directly modulates PDPK1 expression, thus promoting survival of pancreatic beta-cells. Also regulates expression of NDFIP1, BNIP3, and CCNG1. The polypeptide is Homeobox protein Meis3 (MEIS3) (Homo sapiens (Human)).